Consider the following 248-residue polypeptide: 3-deoxy-manno-octulosonate cytidylyltransferase (248 aa).

It belongs to the KdsB family.

It is found in the cytoplasm. It carries out the reaction 3-deoxy-alpha-D-manno-oct-2-ulosonate + CTP = CMP-3-deoxy-beta-D-manno-octulosonate + diphosphate. It participates in nucleotide-sugar biosynthesis; CMP-3-deoxy-D-manno-octulosonate biosynthesis; CMP-3-deoxy-D-manno-octulosonate from 3-deoxy-D-manno-octulosonate and CTP: step 1/1. The protein operates within bacterial outer membrane biogenesis; lipopolysaccharide biosynthesis. Activates KDO (a required 8-carbon sugar) for incorporation into bacterial lipopolysaccharide in Gram-negative bacteria. The polypeptide is 3-deoxy-manno-octulosonate cytidylyltransferase (Desulfosudis oleivorans (strain DSM 6200 / JCM 39069 / Hxd3) (Desulfococcus oleovorans)).